A 181-amino-acid polypeptide reads, in one-letter code: Large ribosomal subunit protein uL10 (181 aa).

It belongs to the universal ribosomal protein uL10 family. In terms of assembly, part of the ribosomal stalk of the 50S ribosomal subunit. The N-terminus interacts with L11 and the large rRNA to form the base of the stalk. The C-terminus forms an elongated spine to which L12 dimers bind in a sequential fashion forming a multimeric L10(L12)X complex.

Forms part of the ribosomal stalk, playing a central role in the interaction of the ribosome with GTP-bound translation factors. The protein is Large ribosomal subunit protein uL10 of Fervidobacterium nodosum (strain ATCC 35602 / DSM 5306 / Rt17-B1).